Consider the following 57-residue polypeptide: Small ribosomal subunit protein bS21 (57 aa).

The tract at residues 24-57 (SKSGTLQESRKREFYEKPSVKRKKKSEAARKRKF) is disordered. A compositionally biased stretch (basic and acidic residues) spans 31–42 (ESRKREFYEKPS). Residues 43–57 (VKRKKKSEAARKRKF) are compositionally biased toward basic residues.

It belongs to the bacterial ribosomal protein bS21 family.

The polypeptide is Small ribosomal subunit protein bS21 (rpsU) (Listeria innocua serovar 6a (strain ATCC BAA-680 / CLIP 11262)).